Here is a 585-residue protein sequence, read N- to C-terminus: Chaperonin GroEL, chloroplastic (585 aa).

Residues 55-58 (TLGP), 113-117 (DGTTT), Gly-442, 507-509 (NAA), and Asp-523 contribute to the ATP site.

Belongs to the chaperonin (HSP60) family. Forms a cylinder of 14 subunits composed of two heptameric rings stacked back-to-back. Interacts with the co-chaperonin GroES.

The protein resides in the plastid. The protein localises to the chloroplast. It catalyses the reaction ATP + H2O + a folded polypeptide = ADP + phosphate + an unfolded polypeptide.. Together with its co-chaperonin GroES, plays an essential role in assisting protein folding. The GroEL-GroES system forms a nano-cage that allows encapsulation of the non-native substrate proteins and provides a physical environment optimized to promote and accelerate protein folding. This chain is Chaperonin GroEL, chloroplastic, found in Pyrenomonas salina.